Reading from the N-terminus, the 475-residue chain is MSIKTSNTDFKTRIRQQIEDPIMRKAVANAQQRIGANRQKMVDELGHWEEWRDRAAQIRDHVLSNLDAYLYQLSEKVTQNGGHVYFARTKEDATRYILQVAQRKNARKVVKSKSMVTEEIGVNHVLQDAGIQVIETDLGEYILQLDQDPPSHVVVPAIHKDRHQIRRVLHERLGYEGPETPEAMTLFIRQKIREDFLSAEIGITGCNFAVAETGSVCLVTNEGNARMCTTLPKTHIAVMGMERIAPTFAEVDVLITMLARSAVGARLTGYNTWLTGPREAGHVDGPEEFHLVIVDNGRSEVLASEFRDVLRCIRCGACMNTCPAYRHIGGHGYGSIYPGPIGAVISPLLGGYKDFKDLPYACSLCTACDNVCPVRIPLSKLILRHRRVMAEKGITAKAEQRAIKMFAYANSHPGLWKVGMMAGAHAASWFINGGKTPLKFGAISDWMEARDLPEADGESFRSWFKKHQAQEKKNG.

2 4Fe-4S ferredoxin-type domains span residues 303–333 and 352–381; these read ASEF…GHGY and YKDF…LSKL. Cysteine 312, cysteine 315, cysteine 318, cysteine 322, cysteine 362, cysteine 365, cysteine 368, and cysteine 372 together coordinate [4Fe-4S] cluster.

It belongs to the LutB/YkgF family.

This is an uncharacterized protein from Escherichia coli (strain K12).